The primary structure comprises 184 residues: MTALSVNDYLRQHIRTVPDWPAPGVQFRDITPLLQNPKVFRVLIDAFVHRYMDRALRPDVVAGLDARGFILGAVVAYELNVGFVPIRKKGKLPFTTVEETYELEYGSATVELHADAVQPGDRVLLIDDLIATGGTMMAGKKLLEKLGATVMEGAAIVDLPELGGSERLRASGLPLYTLVDFSGH.

Belongs to the purine/pyrimidine phosphoribosyltransferase family. Homodimer.

It is found in the cytoplasm. The enzyme catalyses AMP + diphosphate = 5-phospho-alpha-D-ribose 1-diphosphate + adenine. It participates in purine metabolism; AMP biosynthesis via salvage pathway; AMP from adenine: step 1/1. Functionally, catalyzes a salvage reaction resulting in the formation of AMP, that is energically less costly than de novo synthesis. The sequence is that of Adenine phosphoribosyltransferase from Acidovorax sp. (strain JS42).